We begin with the raw amino-acid sequence, 441 residues long: Ankyrin repeat and MYND domain-containing protein 2 (441 aa).

3 ANK repeats span residues 45 to 74 (NGMT…DVNC), 79 to 108 (HGYT…ETDV), and 159 to 188 (KLAG…NPLL). Zn(2+) contacts are provided by cysteine 320, cysteine 323, cysteine 332, cysteine 335, cysteine 341, cysteine 345, histidine 353, and cysteine 357. The MYND-type zinc-finger motif lies at 320 to 357 (CTTCGEKGASKRCSVCKMVIYCDQTCQKTHWFTHKKIC). Positions 374–384 (EKRQEENHGKL) are enriched in basic and acidic residues. Residues 374 to 441 (EKRQEENHGK…APAGPQVSEE (68 aa)) are disordered.

Interacts with the retinal-specific guanylyl cyclase GC1.

It is found in the cell projection. It localises to the cilium. Its function is as follows. May be involved in the trafficking of signaling proteins to the cilia. The polypeptide is Ankyrin repeat and MYND domain-containing protein 2 (ANKMY2) (Homo sapiens (Human)).